The primary structure comprises 210 residues: Viral protein 1 (210 aa).

The sequence is that of Viral protein 1 from Chaetoceros (Chaetoceros sp. DNA virus 7).